Reading from the N-terminus, the 426-residue chain is Serine--tRNA ligase (426 aa).

An L-serine-binding site is contributed by 233–235; the sequence is TAE. 264–266 contributes to the ATP binding site; sequence RSE. Glu-287 is an L-serine binding site. 351–354 contributes to the ATP binding site; that stretch reads EISS. An L-serine-binding site is contributed by Ser-387.

Belongs to the class-II aminoacyl-tRNA synthetase family. Type-1 seryl-tRNA synthetase subfamily. As to quaternary structure, homodimer. The tRNA molecule binds across the dimer.

The protein localises to the cytoplasm. It carries out the reaction tRNA(Ser) + L-serine + ATP = L-seryl-tRNA(Ser) + AMP + diphosphate + H(+). The catalysed reaction is tRNA(Sec) + L-serine + ATP = L-seryl-tRNA(Sec) + AMP + diphosphate + H(+). It functions in the pathway aminoacyl-tRNA biosynthesis; selenocysteinyl-tRNA(Sec) biosynthesis; L-seryl-tRNA(Sec) from L-serine and tRNA(Sec): step 1/1. In terms of biological role, catalyzes the attachment of serine to tRNA(Ser). Is also able to aminoacylate tRNA(Sec) with serine, to form the misacylated tRNA L-seryl-tRNA(Sec), which will be further converted into selenocysteinyl-tRNA(Sec). This chain is Serine--tRNA ligase, found in Clostridium botulinum (strain Langeland / NCTC 10281 / Type F).